The chain runs to 526 residues: Amino acid transporter AVT1E (526 aa).

The interval 1 to 49 (MKQNETFDQEREDLYHTFDEEDEESQTESSVPSTPLSRNRSEDVPVPWP) is disordered. Residues 8 to 18 (DQEREDLYHTF) are compositionally biased toward basic and acidic residues. 11 helical membrane-spanning segments follow: residues 140–160 (SVLN…PYAV), 165–185 (WLGL…GILL), 212–232 (ILVS…YIIM), 253–273 (LDST…TVWL), 278–298 (LLSY…LCLF), 320–340 (IPVA…FPNI), 353–373 (VLLI…VCGF), 397–417 (IAVW…ITPV), 436–456 (GVSM…ALTV), 458–478 (FFAT…ALIF), and 494–514 (FQIG…CCGT).

Belongs to the amino acid/polyamine transporter 2 family. Amino acid/auxin permease (AAAP) (TC 2.A.18.5) subfamily.

The protein localises to the membrane. The sequence is that of Amino acid transporter AVT1E from Arabidopsis thaliana (Mouse-ear cress).